Reading from the N-terminus, the 444-residue chain is ATPase PAAT (444 aa).

Residues Ser177, Ser182, Ser254, and Ser302 each carry the phosphoserine modification. A disordered region spans residues 424-444; it reads PSPGMPLRHYDSRERLSNGER. Over residues 431-444 the composition is skewed to basic and acidic residues; the sequence is RHYDSRERLSNGER.

Homodimer. Interacts with ABCB7, ABCB8/MITOSUR and ABCB10.

The protein localises to the cytoplasm. It localises to the mitochondrion. It catalyses the reaction ATP + H2O = ADP + phosphate + H(+). ATPase that regulates mitochondrial ABC transporters ABCB7, ABCB8/MITOSUR and ABCB10. Regulates mitochondrial ferric concentration and heme biosynthesis and plays a role in the maintenance of mitochondrial homeostasis and cell survival. This chain is ATPase PAAT, found in Rattus norvegicus (Rat).